Here is a 156-residue protein sequence, read N- to C-terminus: Transmembrane inner ear expressed protein (156 aa).

The N-terminal stretch at 1 to 27 (MAGWPGAGPLCVLGGAALGVCLAGVAG) is a signal peptide. Residues 28-57 (QLVEPSTAPPKPKPPPLTKETVVFWDMRLW) are Extracellular-facing. A helical membrane pass occupies residues 58 to 78 (HVVGIFSLFVLSIIITLCCVF). Residues 79-156 (NCRVPRTRKE…NEAKKKKGEK (78 aa)) lie on the Cytoplasmic side of the membrane. The interval 113–135 (NELTEVPGEDKKKKKKKKKDSVD) is disordered.

As to quaternary structure, forms the MET channel composed of TMC (TMC1 or TMC2), TMIE, TOMT, CIB (CIB2 or CIB3), LHPL5 and PCDH15. In terms of tissue distribution, expressed in many tissues.

It localises to the membrane. Its function is as follows. Auxiliary subunit of the mechanotransducer (MET) non-specific cation channel complex located at the tips of stereocilia of cochlear hair cells and that mediates sensory transduction in the auditory system. The MET complex is composed of two dimeric pore-forming ion-conducting transmembrane TMC (TMC1 or TMC2) subunits, and aided by several auxiliary proteins including LHFPL5, TMIE, CIB2/3 and TOMT, and the tip-link PCDH15. May contribute to the formation of the pore. The polypeptide is Transmembrane inner ear expressed protein (TMIE) (Homo sapiens (Human)).